The following is a 254-amino-acid chain: Protein Thf1 (254 aa).

Residues 182-241 (EEKMKKDLDLYRSNLEKMNQVLEVLEDALAVERQRREKAEAEAKAKTAEATVATETNDEQ) are a coiled coil. The segment covering 215-228 (QRREKAEAEAKAKT) has biased composition (basic and acidic residues). The segment at 215–254 (QRREKAEAEAKAKTAEATVATETNDEQDEQKETSESGSDA) is disordered.

This sequence belongs to the THF1 family.

In terms of biological role, may be involved in photosynthetic membrane biogenesis. This Picosynechococcus sp. (strain ATCC 27264 / PCC 7002 / PR-6) (Agmenellum quadruplicatum) protein is Protein Thf1.